We begin with the raw amino-acid sequence, 941 residues long: Ankyrin repeat and MYND domain-containing protein 1 (941 aa).

MORN repeat units follow at residues 2-24 (YQGE…TGES), 25-47 (YHGQ…DGSS), and 70-92 (FQGL…DGSQ). ANK repeat units lie at residues 292 to 321 (KGYT…DVNK), 513 to 542 (MRRM…DPNL), 545 to 574 (VPMQ…RTDI), 581 to 613 (STLT…DVDA), 657 to 691 (GGRT…NPNL), 694 to 723 (SGHS…DPNL), and 737 to 766 (CDLT…DILK). C880, C883, C894, C897, C903, C907, H916, and C920 together coordinate Zn(2+). An MYND-type zinc finger spans residues 880 to 920 (CYQCGRSIGVRLLPCPRCYGILTCSKYCKTKAWTEFHKKDC).

The sequence is that of Ankyrin repeat and MYND domain-containing protein 1 (ANKMY1) from Homo sapiens (Human).